A 125-amino-acid chain; its full sequence is Large ribosomal subunit protein bL12 (125 aa).

This sequence belongs to the bacterial ribosomal protein bL12 family. As to quaternary structure, homodimer. Part of the ribosomal stalk of the 50S ribosomal subunit. Forms a multimeric L10(L12)X complex, where L10 forms an elongated spine to which 2 to 4 L12 dimers bind in a sequential fashion. Binds GTP-bound translation factors.

Forms part of the ribosomal stalk which helps the ribosome interact with GTP-bound translation factors. Is thus essential for accurate translation. The chain is Large ribosomal subunit protein bL12 from Anaeromyxobacter dehalogenans (strain 2CP-1 / ATCC BAA-258).